Consider the following 296-residue polypeptide: 4-hydroxy-tetrahydrodipicolinate synthase (296 aa).

Residue Thr49 participates in pyruvate binding. The Proton donor/acceptor role is filled by Tyr137. Catalysis depends on Lys166, which acts as the Schiff-base intermediate with substrate. Ile208 provides a ligand contact to pyruvate.

Belongs to the DapA family. As to quaternary structure, homotetramer; dimer of dimers.

The protein localises to the cytoplasm. The catalysed reaction is L-aspartate 4-semialdehyde + pyruvate = (2S,4S)-4-hydroxy-2,3,4,5-tetrahydrodipicolinate + H2O + H(+). It functions in the pathway amino-acid biosynthesis; L-lysine biosynthesis via DAP pathway; (S)-tetrahydrodipicolinate from L-aspartate: step 3/4. Its function is as follows. Catalyzes the condensation of (S)-aspartate-beta-semialdehyde [(S)-ASA] and pyruvate to 4-hydroxy-tetrahydrodipicolinate (HTPA). The chain is 4-hydroxy-tetrahydrodipicolinate synthase from Chlorobium phaeobacteroides (strain DSM 266 / SMG 266 / 2430).